The following is a 431-amino-acid chain: Probable indole-3-pyruvate monooxygenase YUCCA7 (431 aa).

36-41 (GAGPSG) contributes to the FAD binding site. NADP(+) is bound at residue 207–212 (GCGNSG).

This sequence belongs to the FMO family. Requires FAD as cofactor. Expressed in shoot apex regions and siliques, and at high levels in roots. Detected in flowers, stems and leaves.

It catalyses the reaction indole-3-pyruvate + NADPH + O2 + H(+) = (indol-3-yl)acetate + CO2 + NADP(+) + H2O. Its pathway is plant hormone metabolism; auxin biosynthesis. Its function is as follows. Involved in auxin biosynthesis. Belongs to the set of redundant YUCCA genes probably responsible for auxin biosynthesis in roots. This Arabidopsis thaliana (Mouse-ear cress) protein is Probable indole-3-pyruvate monooxygenase YUCCA7 (YUC7).